A 306-amino-acid polypeptide reads, in one-letter code: Recombination-associated protein RdgC (306 aa).

This sequence belongs to the RdgC family.

It is found in the cytoplasm. Its subcellular location is the nucleoid. In terms of biological role, may be involved in recombination. In Pseudomonas putida (strain ATCC 47054 / DSM 6125 / CFBP 8728 / NCIMB 11950 / KT2440), this protein is Recombination-associated protein RdgC.